Reading from the N-terminus, the 326-residue chain is UDP-N-acetylglucosamine transporter (326 aa).

8 consecutive transmembrane segments (helical) span residues asparagine 4 to methionine 24, leucine 38 to valine 58, leucine 136 to tryptophan 156, phenylalanine 174 to phenylalanine 194, leucine 212 to valine 232, glutamine 243 to isoleucine 263, isoleucine 269 to tryptophan 289, and phenylalanine 293 to tyrosine 313.

This sequence belongs to the nucleotide-sugar transporter family. SLC35A subfamily. As to quaternary structure, interacts with SLC35A2; the interaction is reduced in the presence of SLC35A4. Found in a complex with SLC35A2 and SLC35A4. Interacts with MGAT4B. Post-translationally, O-Glcnacylation regulates the stability of SLC35A3 and the specific complex formation with MGAT4B.

It is found in the golgi apparatus membrane. It carries out the reaction UMP(out) + UDP-N-acetyl-alpha-D-glucosamine(in) = UMP(in) + UDP-N-acetyl-alpha-D-glucosamine(out). Functionally, transports diphosphate-N-acetylglucosamine (UDP-GlcNAc) from the cytosol into the lumen of the Golgi apparatus, functioning as an antiporter that exchanges UDP-N-acetyl-alpha-D-glucosamine for UMP. May supply UDP-GlcNAc as substrate for Golgi-resident glycosyltransferases that generate highly branched, multiantennary complex N-glycans and keratan sulfate. However, the exact role of SLC35A3 still needs to be elucidated, it could be a member of a catalytically more efficient multiprotein complex rather than function independently as a single transporter. This Mus musculus (Mouse) protein is UDP-N-acetylglucosamine transporter (Slc35a3).